The sequence spans 524 residues: Na(+)/H(+) antiporter NhaB (524 aa).

Helical transmembrane passes span 23–43 (IAIL…PFYA), 44–64 (GWLL…CYPL), 97–117 (LLLI…LFVF), 120–140 (LLLN…AAAF), 144–164 (FLDA…FYGI), 203–223 (LLMH…VGEP), 236–256 (FVSF…CGIL), 304–324 (ALVG…VGLI), 354–374 (FTAL…QHLF), 392–412 (LFYL…VGTV), 448–468 (ATPN…APLI), and 476–496 (VWMA…CVIF).

The protein belongs to the NhaB Na(+)/H(+) (TC 2.A.34) antiporter family.

It localises to the cell inner membrane. It catalyses the reaction 2 Na(+)(in) + 3 H(+)(out) = 2 Na(+)(out) + 3 H(+)(in). Its function is as follows. Na(+)/H(+) antiporter that extrudes sodium in exchange for external protons. This chain is Na(+)/H(+) antiporter NhaB, found in Edwardsiella ictaluri (strain 93-146).